Here is a 172-residue protein sequence, read N- to C-terminus: Small ribosomal subunit protein uS5 (172 aa).

Residues 16–79 (LKDRLVAINR…EAAKKNLIRV (64 aa)) enclose the S5 DRBM domain.

This sequence belongs to the universal ribosomal protein uS5 family. Part of the 30S ribosomal subunit. Contacts proteins S4 and S8.

Its function is as follows. With S4 and S12 plays an important role in translational accuracy. Functionally, located at the back of the 30S subunit body where it stabilizes the conformation of the head with respect to the body. The protein is Small ribosomal subunit protein uS5 of Porphyromonas gingivalis (strain ATCC BAA-308 / W83).